The following is a 95-amino-acid chain: Co-chaperonin GroES (95 aa).

It belongs to the GroES chaperonin family. In terms of assembly, heptamer of 7 subunits arranged in a ring. Interacts with the chaperonin GroEL.

The protein localises to the cytoplasm. Functionally, together with the chaperonin GroEL, plays an essential role in assisting protein folding. The GroEL-GroES system forms a nano-cage that allows encapsulation of the non-native substrate proteins and provides a physical environment optimized to promote and accelerate protein folding. GroES binds to the apical surface of the GroEL ring, thereby capping the opening of the GroEL channel. In Francisella tularensis subsp. tularensis (strain FSC 198), this protein is Co-chaperonin GroES.